The sequence spans 242 residues: N-glycosylase/DNA lyase (242 aa).

8-oxoguanine is bound by residues Q25, S52, and W63. A helix-hairpin-helix region spans residues 119 to 183; that stretch reads KSYYRDMNRL…VDARIERITR (65 aa). K143 serves as the catalytic Schiff-base intermediate with DNA. F147 and P173 together coordinate 8-oxoguanine. Residue D175 is part of the active site. 8-oxoguanine is bound by residues D209 and W213.

This sequence belongs to the archaeal N-glycosylase/DNA lyase (AGOG) family.

It carries out the reaction 2'-deoxyribonucleotide-(2'-deoxyribose 5'-phosphate)-2'-deoxyribonucleotide-DNA = a 3'-end 2'-deoxyribonucleotide-(2,3-dehydro-2,3-deoxyribose 5'-phosphate)-DNA + a 5'-end 5'-phospho-2'-deoxyribonucleoside-DNA + H(+). Its function is as follows. DNA repair enzyme that is part of the base excision repair (BER) pathway; protects from oxidative damage by removing the major product of DNA oxidation, 8-oxoguanine (GO), from single- and double-stranded DNA substrates. The protein is N-glycosylase/DNA lyase of Methanopyrus kandleri (strain AV19 / DSM 6324 / JCM 9639 / NBRC 100938).